The primary structure comprises 143 residues: Large ribosomal subunit protein uL11 (143 aa).

This sequence belongs to the universal ribosomal protein uL11 family. As to quaternary structure, part of the ribosomal stalk of the 50S ribosomal subunit. Interacts with L10 and the large rRNA to form the base of the stalk. L10 forms an elongated spine to which L12 dimers bind in a sequential fashion forming a multimeric L10(L12)X complex. Post-translationally, one or more lysine residues are methylated.

In terms of biological role, forms part of the ribosomal stalk which helps the ribosome interact with GTP-bound translation factors. The protein is Large ribosomal subunit protein uL11 of Variovorax paradoxus (strain S110).